A 234-amino-acid polypeptide reads, in one-letter code: Endonuclease V (234 aa).

Asp-36 and Asp-104 together coordinate Mg(2+).

Belongs to the endonuclease V family. It depends on Mg(2+) as a cofactor.

Its subcellular location is the cytoplasm. It carries out the reaction Endonucleolytic cleavage at apurinic or apyrimidinic sites to products with a 5'-phosphate.. Its function is as follows. DNA repair enzyme involved in the repair of deaminated bases. Selectively cleaves double-stranded DNA at the second phosphodiester bond 3' to a deoxyinosine leaving behind the intact lesion on the nicked DNA. The chain is Endonuclease V from Yersinia pseudotuberculosis serotype O:1b (strain IP 31758).